A 167-amino-acid chain; its full sequence is uncharacterized protein (167 aa).

This is an uncharacterized protein from Mycobacterium tuberculosis (strain CDC 1551 / Oshkosh).